Reading from the N-terminus, the 431-residue chain is Serine/threonine-protein kinase Sgk1 (431 aa).

The tract at residues 1 to 60 is necessary for localization to the mitochondria; that stretch reads MTVKTEAARGPLTYSRMRGMVAILIAFMKQRRMGLNDFIQKIANNSYACKHTEVQSILKI. The disordered stretch occupies residues 66–92; it reads PELMNANPSPPPSPSQQINLGPSSNPH. A Phosphoserine modification is found at S74. Phosphoserine; by MAPK7 is present on S78. Residues 81–91 show a composition bias toward polar residues; sequence QQINLGPSSNP. Residues 98–355 form the Protein kinase domain; that stretch reads FHFLKVIGKG…FMEIRNHVFF (258 aa). Residues 104-112 and K127 contribute to the ATP site; that span reads IGKGSFGKV. The Nuclear localization signal signature appears at 131-141; it reads KKAILKKKEEK. The Proton acceptor role is filled by D222. T256 is modified (phosphothreonine; by PDPK1). The 76-residue stretch at 356 to 431 folds into the AGC-kinase C-terminal domain; that stretch reads SLINWDDLIN…SYAPPMDSFL (76 aa). T369 bears the Phosphothreonine; by PKA mark. 3 positions are modified to phosphoserine: S397, S401, and S422.

It belongs to the protein kinase superfamily. AGC Ser/Thr protein kinase family. In terms of assembly, homodimer; disulfide-linked. Forms a trimeric complex with FBXW7 and NOTCH1. Interacts with MAPK3/ERK1, MAPK1/ERK2, MAP2K1/MEK1, MAP2K2/MEK2, NEDD4, NEDD4L, MAPT/TAU, MAPK7, CREB1, SLC9A3R2/NHERF2 and KCNJ1/ROMK1. Associates with the mammalian target of rapamycin complex 2 (mTORC2) via an interaction with MAPKAP1/SIN1. Post-translationally, regulated by phosphorylation. Activated by phosphorylation on Ser-422 by mTORC2, transforming it into a substrate for PDPK1 which phosphorylates it on Thr-256. Phosphorylation on Ser-397 and Ser-401 are also essential for its activity. Phosphorylation on Ser-78 by MAPK7 is required for growth factor-induced cell cycle progression. In terms of processing, ubiquitinated by NEDD4L; which promotes proteasomal degradation. Ubiquitinated by SYVN1 at the endoplasmic reticulum; which promotes rapid proteasomal degradation and maintains a high turnover rate in resting cells.

It is found in the cytoplasm. The protein resides in the nucleus. The protein localises to the endoplasmic reticulum membrane. It localises to the cell membrane. Its subcellular location is the mitochondrion. The enzyme catalyses L-seryl-[protein] + ATP = O-phospho-L-seryl-[protein] + ADP + H(+). It catalyses the reaction L-threonyl-[protein] + ATP = O-phospho-L-threonyl-[protein] + ADP + H(+). Its activity is regulated as follows. Two specific sites, one in the kinase domain (Thr-256) and the other in the C-terminal regulatory region (Ser-422), need to be phosphorylated for its full activation. Phosphorylation at Ser-397 and Ser-401 are also essential for its activity. Activated by WNK1, WNK2, WNK3 and WNK4; which promote phosphorylation by mTORC2. In terms of biological role, serine/threonine-protein kinase which is involved in the regulation of a wide variety of ion channels, membrane transporters, cellular enzymes, transcription factors, neuronal excitability, cell growth, proliferation, survival, migration and apoptosis. Plays an important role in cellular stress response. Contributes to regulation of renal Na(+) retention, renal K(+) elimination, salt appetite, gastric acid secretion, intestinal Na(+)/H(+) exchange and nutrient transport, insulin-dependent salt sensitivity of blood pressure, salt sensitivity of peripheral glucose uptake, cardiac repolarization and memory consolidation. Up-regulates Na(+) channels: SCNN1A/ENAC, SCN5A and ASIC1/ACCN2, K(+) channels: KCNJ1/ROMK1, KCNA1-5, KCNQ1-5 and KCNE1, epithelial Ca(2+) channels: TRPV5 and TRPV6, chloride channels: BSND, CLCN2 and CFTR, glutamate transporters: SLC1A3/EAAT1, SLC1A2 /EAAT2, SLC1A1/EAAT3, SLC1A6/EAAT4 and SLC1A7/EAAT5, amino acid transporters: SLC1A5/ASCT2, SLC38A1/SN1 and SLC6A19, creatine transporter: SLC6A8, Na(+)/dicarboxylate cotransporter: SLC13A2/NADC1, Na(+)-dependent phosphate cotransporter: SLC34A2/NAPI-2B, glutamate receptor: GRIK2/GLUR6. Up-regulates carriers: SLC9A3/NHE3, SLC12A1/NKCC2, SLC12A3/NCC, SLC5A3/SMIT, SLC2A1/GLUT1, SLC5A1/SGLT1 and SLC15A2/PEPT2. Regulates enzymes: GSK3A/B, PMM2 and Na(+)/K(+) ATPase, and transcription factors: CTNNB1 and nuclear factor NF-kappa-B. Stimulates sodium transport into epithelial cells by enhancing the stability and expression of SCNN1A/ENAC. This is achieved by phosphorylating the NEDD4L ubiquitin E3 ligase, promoting its interaction with 14-3-3 proteins, thereby preventing it from binding to SCNN1A/ENAC and targeting it for degradation. Regulates store-operated Ca(+2) entry (SOCE) by stimulating ORAI1 and STIM1. Regulates KCNJ1/ROMK1 directly via its phosphorylation or indirectly via increased interaction with SLC9A3R2/NHERF2. Phosphorylates MDM2 and activates MDM2-dependent ubiquitination of p53/TP53. Phosphorylates MAPT/TAU and mediates microtubule depolymerization and neurite formation in hippocampal neurons. Phosphorylates SLC2A4/GLUT4 and up-regulates its activity. Phosphorylates APBB1/FE65 and promotes its localization to the nucleus. Phosphorylates MAPK1/ERK2 and activates it by enhancing its interaction with MAP2K1/MEK1 and MAP2K2/MEK2. Phosphorylates FBXW7 and plays an inhibitory role in the NOTCH1 signaling. Phosphorylates FOXO1 resulting in its relocalization from the nucleus to the cytoplasm. Phosphorylates FOXO3, promoting its exit from the nucleus and interference with FOXO3-dependent transcription. Phosphorylates BRAF and MAP3K3/MEKK3 and inhibits their activity. Phosphorylates SLC9A3/NHE3 in response to dexamethasone, resulting in its activation and increased localization at the cell membrane. Phosphorylates CREB1. Necessary for vascular remodeling during angiogenesis. The chain is Serine/threonine-protein kinase Sgk1 (SGK1) from Oryctolagus cuniculus (Rabbit).